The chain runs to 131 residues: Large ribosomal subunit protein bL17 (131 aa).

It belongs to the bacterial ribosomal protein bL17 family. Part of the 50S ribosomal subunit. Contacts protein L32.

This is Large ribosomal subunit protein bL17 from Methylibium petroleiphilum (strain ATCC BAA-1232 / LMG 22953 / PM1).